A 704-amino-acid chain; its full sequence is Probable serine/threonine-protein kinase WNK1 (704 aa).

The Protein kinase domain occupies 27–284 (GRYNDVLGKG…ARELLKDPFL (258 aa)). Residues 107-110 (TEMF) and K157 contribute to the ATP site. D174 acts as the Proton acceptor in catalysis. Residues 499 to 521 (QTDLQDSGGSSDDGGGQTQHVKD) form a disordered region.

Belongs to the protein kinase superfamily. Ser/Thr protein kinase family. WNK subfamily.

It catalyses the reaction L-seryl-[protein] + ATP = O-phospho-L-seryl-[protein] + ADP + H(+). The enzyme catalyses L-threonyl-[protein] + ATP = O-phospho-L-threonyl-[protein] + ADP + H(+). The polypeptide is Probable serine/threonine-protein kinase WNK1 (WNK1) (Oryza sativa subsp. japonica (Rice)).